The following is an 851-amino-acid chain: DNA mismatch repair protein MutS (851 aa).

602-609 contributes to the ATP binding site; that stretch reads GPNMSGKS.

It belongs to the DNA mismatch repair MutS family.

This protein is involved in the repair of mismatches in DNA. It is possible that it carries out the mismatch recognition step. This protein has a weak ATPase activity. This chain is DNA mismatch repair protein MutS, found in Streptococcus pyogenes serotype M6 (strain ATCC BAA-946 / MGAS10394).